The sequence spans 226 residues: uncharacterized protein (226 aa).

This is an uncharacterized protein from Bacillus subtilis (strain 168).